Reading from the N-terminus, the 441-residue chain is Nucleoprotein (441 aa).

Serine 5 carries the phosphoserine; by host modification. Residues 14–136 form the CoV N NTD domain; that stretch reads VPLSLYAPLR…QLPSVVEIVE (123 aa). The RNA-binding stretch occupies residues 16 to 146; the sequence is LSLYAPLRVT…PNTPPASRAN (131 aa). Disordered stretches follow at residues 131–219 and 231–278; these read VVEI…VTSR and KSLG…LKDI. A Phosphoserine; by host modification is found at serine 143. The span at 143 to 215 shows a compositional bias: low complexity; the sequence is SRANSRSRSR…NRNQSNDRGG (73 aa). Composition is skewed to basic and acidic residues over residues 238–255 and 269–278; these read NPDR…KSDN and TSKERDLKDI. A CoV N CTD domain is found at 266–382; that stretch reads SRATSKERDL…AFKTGNAKLQ (117 aa). Residues 277-379 are dimerization; that stretch reads DIPEWRRIPK…QVDAFKTGNA (103 aa).

This sequence belongs to the alphacoronavirus nucleocapsid protein family. Homooligomer. Both monomeric and oligomeric forms interact with RNA. Interacts with protein M. Interacts with NSP3; this interaction serves to tether the genome to the newly translated replicase-transcriptase complex at a very early stage of infection. Interacts with host RSAD2; this interaction inhibits viral replication. ADP-ribosylated. The ADP-ribosylation is retained in the virion during infection. In terms of processing, phosphorylated on serine and threonine residues.

The protein resides in the virion. It is found in the host endoplasmic reticulum-Golgi intermediate compartment. Its subcellular location is the host Golgi apparatus. Functionally, packages the positive strand viral genome RNA into a helical ribonucleocapsid (RNP) and plays a fundamental role during virion assembly through its interactions with the viral genome and membrane protein M. Plays an important role in enhancing the efficiency of subgenomic viral RNA transcription as well as viral replication. The protein is Nucleoprotein of Porcine epidemic diarrhea virus (strain CV777) (PEDV).